Here is a 251-residue protein sequence, read N- to C-terminus: Hydroxyacylglutathione hydrolase (251 aa).

Zn(2+) contacts are provided by His-53, His-55, Asp-57, His-58, His-110, Asp-127, and His-165.

The protein belongs to the metallo-beta-lactamase superfamily. Glyoxalase II family. Monomer. Zn(2+) is required as a cofactor.

The enzyme catalyses an S-(2-hydroxyacyl)glutathione + H2O = a 2-hydroxy carboxylate + glutathione + H(+). It functions in the pathway secondary metabolite metabolism; methylglyoxal degradation; (R)-lactate from methylglyoxal: step 2/2. Thiolesterase that catalyzes the hydrolysis of S-D-lactoyl-glutathione to form glutathione and D-lactic acid. The protein is Hydroxyacylglutathione hydrolase of Salmonella paratyphi A (strain ATCC 9150 / SARB42).